The sequence spans 189 residues: Nucleolar protein 16 (189 aa).

Positions 1-33 (MARDVKKRGKPAYTNRRNRQKYLKKKDNKKKLS) are enriched in basic residues. The disordered stretch occupies residues 1–34 (MARDVKKRGKPAYTNRRNRQKYLKKKDNKKKLSK).

Belongs to the NOP16 family.

It is found in the nucleus. It localises to the nucleolus. In Caenorhabditis elegans, this protein is Nucleolar protein 16.